The sequence spans 517 residues: Ubiquitin carboxyl-terminal hydrolase 30 (517 aa).

At 1-35 the chain is on the mitochondrial intermembrane side; that stretch reads MLSSRAQAARTAADKALQRFLRTGAAVRYKVMKNW. A helical membrane pass occupies residues 36-56; that stretch reads GVIGGIAAALAAGIYVIWGPI. Over 57–517 the chain is Cytoplasmic; it reads TERKKRRKGL…QQGREYRSEE (461 aa). A USP domain is found at 68–502; that stretch reads PGLVNLGNTC…SAYLLFYERV (435 aa). The Nucleophile role is filled by cysteine 77. Residues lysine 235 and lysine 289 each participate in a glycyl lysine isopeptide (Lys-Gly) (interchain with G-Cter in ubiquitin) cross-link. A disordered region spans residues 364–395; that stretch reads SQHGPKATESPGSALGVQDTQAAPKPGLSQPA. The Proton acceptor role is filled by histidine 452.

It belongs to the peptidase C19 family. Post-translationally, ubiquitinated by parkin (PRKN) at Lys-235 and Lys-289, leading to its degradation.

The protein resides in the mitochondrion outer membrane. The catalysed reaction is Thiol-dependent hydrolysis of ester, thioester, amide, peptide and isopeptide bonds formed by the C-terminal Gly of ubiquitin (a 76-residue protein attached to proteins as an intracellular targeting signal).. Its activity is regulated as follows. Inhibited by the diterpenoid derivative 15-oxospiramilactone (S3). Functionally, deubiquitinating enzyme tethered to the mitochondrial outer membrane that acts as a key inhibitor of mitophagy by counteracting the action of parkin (PRKN): hydrolyzes ubiquitin attached by parkin on target proteins, such as RHOT1/MIRO1 and TOMM20, thereby blocking parkin's ability to drive mitophagy. Preferentially cleaves 'Lys-6'- and 'Lys-11'-linked polyubiquitin chains, 2 types of linkage that participate in mitophagic signaling. Does not cleave efficiently polyubiquitin phosphorylated at 'Ser-65'. Acts as a negative regulator of mitochondrial fusion by mediating deubiquitination of MFN1 and MFN2. The chain is Ubiquitin carboxyl-terminal hydrolase 30 (Usp30) from Rattus norvegicus (Rat).